Consider the following 191-residue polypeptide: UPF0312 protein Sbal_3041 (191 aa).

The N-terminal stretch at 1-22 is a signal peptide; the sequence is MKKQLLSALIGASLLAPMAASA.

This sequence belongs to the UPF0312 family. Type 1 subfamily.

The protein resides in the periplasm. The polypeptide is UPF0312 protein Sbal_3041 (Shewanella baltica (strain OS155 / ATCC BAA-1091)).